A 247-amino-acid polypeptide reads, in one-letter code: Granulin (247 aa).

Belongs to the polyhedrin family.

Functionally, component of the virus occlusion bodies, which are large proteinaceous structures, that protect the virus from the outside environment for extended periods until they are ingested by insect larvae. This is Granulin from Agrotis segetum granulosis virus (AsGV).